A 444-amino-acid polypeptide reads, in one-letter code: Spermidine/putrescine import ATP-binding protein PotA (444 aa).

One can recognise an ABC transporter domain in the interval 11 to 332 (ISLVDVDKEF…PVNKWVANFI (322 aa)). 43-50 (GPSGSGKT) is an ATP binding site. An insert region spans residues 111 to 201 (RIKKKAEEIP…ESFKKKYLTR (91 aa)).

It belongs to the ABC transporter superfamily. Spermidine/putrescine importer (TC 3.A.1.11.1) family. The complex is composed of two ATP-binding proteins (PotA), two transmembrane proteins (PotB and PotC) and a solute-binding protein (PotD).

The protein localises to the cell membrane. The enzyme catalyses ATP + H2O + polyamine-[polyamine-binding protein]Side 1 = ADP + phosphate + polyamineSide 2 + [polyamine-binding protein]Side 1.. Functionally, part of the ABC transporter complex PotABCD involved in spermidine/putrescine import. Responsible for energy coupling to the transport system. This is Spermidine/putrescine import ATP-binding protein PotA from Mesomycoplasma hyopneumoniae (strain 232) (Mycoplasma hyopneumoniae).